A 448-amino-acid polypeptide reads, in one-letter code: Tapasin (448 aa).

The N-terminal stretch at 1–20 is a signal peptide; it reads MKSLSLLLAVALGLATAVSA. The Lumenal portion of the chain corresponds to 21–414; the sequence is GPAVIECWFV…LSGPSLEDSV (394 aa). Cysteines 27 and 91 form a disulfide. N-linked (GlcNAc...) asparagine glycosylation occurs at Asn-253. In terms of domain architecture, Ig-like C1-type spans 292–399; the sequence is PKVSLMPATL…PASGRSAEVT (108 aa). The cysteines at positions 315 and 382 are disulfide-linked. A helical transmembrane segment spans residues 415–435; it reads GLFLSAFLLLGLFKALGWAAV. Topologically, residues 436 to 448 are cytoplasmic; sequence YLSTCKDSKKKAE.

Heterodimer with PDIA3; disulfide-linked. Obligatory mediator for the interaction between newly assembled MHC class I molecules, calreticulin, PDIA3 and TAP. Up to 4 MHC class I/tapasin complexes bind to 1 TAP. Interacts with HLA-G-B2M complex; this interaction is required for loading of high affinity peptides. On its own or as part of MHC class I peptide loading complex, interacts with ligand-free MR1 or MR1-B2M complex, providing for stable MR1 pools ready for metabolite antigen processing. Neutrophils, mostly in fully differentiated cells.

Its subcellular location is the endoplasmic reticulum membrane. Its function is as follows. Involved in the association of MHC class I with transporter associated with antigen processing (TAP) and in the assembly of MHC class I with peptide (peptide loading). This is Tapasin from Homo sapiens (Human).